A 568-amino-acid chain; its full sequence is Probable inactive 1-aminocyclopropane-1-carboxylate synthase-like protein 2 (568 aa).

Residues methionine 1–arginine 21 form a disordered region. Lysine 395 bears the N6-(pyridoxal phosphate)lysine mark.

This sequence belongs to the class-I pyridoxal-phosphate-dependent aminotransferase family.

This is Probable inactive 1-aminocyclopropane-1-carboxylate synthase-like protein 2 (ACCSL) from Homo sapiens (Human).